The sequence spans 419 residues: C2 calcium-dependent domain-containing protein 4C (419 aa).

4 disordered regions span residues Met1 to Glu96, Glu115 to Pro136, Ala151 to Gly225, and Val247 to Lys300. A compositionally biased stretch (low complexity) spans Leu75 to Ala94. Residues Lys186–Glu196 are compositionally biased toward gly residues. Over residues Glu212 to Gly225 the composition is skewed to polar residues. Phosphoserine occurs at positions 259, 261, and 270. A C2 domain is found at Thr303–Leu419.

The protein belongs to the C2CD4 family.

This Mus musculus (Mouse) protein is C2 calcium-dependent domain-containing protein 4C (C2cd4c).